Reading from the N-terminus, the 340-residue chain is Ketol-acid reductoisomerase (NADP(+)) (340 aa).

In terms of domain architecture, KARI N-terminal Rossmann spans 1–182 (MRVYYDRDCD…GGGRSGIIET (182 aa)). Residues 24-27 (YGSQ), arginine 48, serine 51, serine 53, and 83-86 (DELQ) each bind NADP(+). Histidine 108 is a catalytic residue. Glycine 134 contributes to the NADP(+) binding site. The 147-residue stretch at 183–329 (NFRQECETDL…EKLRGMMPWI (147 aa)) folds into the KARI C-terminal knotted domain. Residues aspartate 191, glutamate 195, glutamate 227, and glutamate 231 each contribute to the Mg(2+) site. Serine 252 contributes to the substrate binding site.

This sequence belongs to the ketol-acid reductoisomerase family. It depends on Mg(2+) as a cofactor.

The enzyme catalyses (2R)-2,3-dihydroxy-3-methylbutanoate + NADP(+) = (2S)-2-acetolactate + NADPH + H(+). It catalyses the reaction (2R,3R)-2,3-dihydroxy-3-methylpentanoate + NADP(+) = (S)-2-ethyl-2-hydroxy-3-oxobutanoate + NADPH + H(+). Its pathway is amino-acid biosynthesis; L-isoleucine biosynthesis; L-isoleucine from 2-oxobutanoate: step 2/4. It participates in amino-acid biosynthesis; L-valine biosynthesis; L-valine from pyruvate: step 2/4. Its function is as follows. Involved in the biosynthesis of branched-chain amino acids (BCAA). Catalyzes an alkyl-migration followed by a ketol-acid reduction of (S)-2-acetolactate (S2AL) to yield (R)-2,3-dihydroxy-isovalerate. In the isomerase reaction, S2AL is rearranged via a Mg-dependent methyl migration to produce 3-hydroxy-3-methyl-2-ketobutyrate (HMKB). In the reductase reaction, this 2-ketoacid undergoes a metal-dependent reduction by NADPH to yield (R)-2,3-dihydroxy-isovalerate. This Paracoccus denitrificans (strain Pd 1222) protein is Ketol-acid reductoisomerase (NADP(+)).